We begin with the raw amino-acid sequence, 351 residues long: Protein RecA (351 aa).

67 to 74 (GPESSGKT) is an ATP binding site.

The protein belongs to the RecA family.

The protein resides in the cytoplasm. Can catalyze the hydrolysis of ATP in the presence of single-stranded DNA, the ATP-dependent uptake of single-stranded DNA by duplex DNA, and the ATP-dependent hybridization of homologous single-stranded DNAs. It interacts with LexA causing its activation and leading to its autocatalytic cleavage. The protein is Protein RecA of Arthrobacter sp. (strain FB24).